A 618-amino-acid chain; its full sequence is Neurosecretory protein VGF (618 aa).

Residues 1 to 23 (MKSLRLPATVLFCLLLLIKGLGA) form the signal peptide. Disordered regions lie at residues 23-46 (AAPP…PVAG), 86-201 (VLLQ…LESP), and 219-262 (PERA…GEAL). Residues 26 to 37 (PGHPEAQPPPPS) are compositionally biased toward pro residues. Residues 180–195 (ETAAAETETRTHTLTR) are compositionally biased toward low complexity. Residues 301–332 (LAQVEAGRRQAEATRQAAAQEERLADLASDLL) adopt a coiled-coil conformation. Q310 carries the pyrrolidone carboxylic acid modification. The interval 342–603 (RQRGLGGRGL…EAEERRLQEQ (262 aa)) is disordered. Residues 356 to 378 (GGGRETARQQEEAEQERRGGEER) are compositionally biased toward basic and acidic residues. A compositionally biased stretch (acidic residues) spans 379–395 (VGEEDEEAAEAEAEAEE). The span at 416–434 (AEDKRSREETPGHRRKEAE) shows a compositional bias: basic and acidic residues. S421 carries the post-translational modification Phosphoserine. At T425 the chain carries Phosphothreonine. Residues 435–451 (GAEEGGAEDEDDDEEMD) show a composition bias toward acidic residues. The segment covering 490–500 (PPEPVPPPRAA) has biased composition (pro residues). Positions 578–602 (HYPDREAQARRAQEEAEAEERRLQE) are enriched in basic and acidic residues.

Post-translationally, multiple peptides are derived from VGF, with activities in synaptic plasticity, antidepression, penile erection, autonomic activation, and increases in energy expenditure.

Its subcellular location is the secreted. It localises to the cytoplasmic vesicle. It is found in the secretory vesicle. In terms of biological role, secreted polyprotein that is packaged and proteolytically processed by prohormone convertases PCSK1 and PCSK2 in a cell-type-specific manner. VGF and peptides derived from its processing play many roles in neurogenesis and neuroplasticity associated with learning, memory, depression and chronic pain. Plays a role in the control of body fluid homeostasis by regulating vasopressin release. Suppresses presynaptic glutamatergic neurons connected to vasopressin neurons. Its function is as follows. Plays a role in the control of body fluid homeostasis by regulating vasopressin release. Activates GABAergic interneurons which are inhibitory neurons of the nervous system and thereby suppresses presynaptic glutamatergic neurons. Also stimulates feeding behavior in an orexin-dependent manner in the hypothalamus. Functions as a positive regulator for the activation of orexin neurons resulting in elevated gastric acid secretion and gastric emptying. This chain is Neurosecretory protein VGF, found in Bos taurus (Bovine).